We begin with the raw amino-acid sequence, 196 residues long: Carnitine operon protein CaiE (196 aa).

Residues 173-196 (TQPLRQMEENRPRLQGTTDVTPKR) are disordered. A compositionally biased stretch (polar residues) spans 187–196 (QGTTDVTPKR).

The protein belongs to the transferase hexapeptide repeat family.

The protein operates within amine and polyamine metabolism; carnitine metabolism. In terms of biological role, overproduction of CaiE stimulates the activity of CaiB and CaiD. This chain is Carnitine operon protein CaiE, found in Escherichia coli O157:H7.